The following is a 535-amino-acid chain: GMP synthase [glutamine-hydrolyzing] (535 aa).

Positions 20-210 (PVLVVDFGAQ…LHRCAALPND (191 aa)) constitute a Glutamine amidotransferase type-1 domain. The active-site Nucleophile is the cysteine 97. Residues histidine 184 and glutamate 186 contribute to the active site. The GMPS ATP-PPase domain occupies 211–409 (WDASSIIEDQ…LGLPDEIVWR (199 aa)). 238 to 244 (SGGVDSA) lines the ATP pocket.

Homodimer.

The catalysed reaction is XMP + L-glutamine + ATP + H2O = GMP + L-glutamate + AMP + diphosphate + 2 H(+). The protein operates within purine metabolism; GMP biosynthesis; GMP from XMP (L-Gln route): step 1/1. Catalyzes the synthesis of GMP from XMP. In Bifidobacterium longum (strain NCC 2705), this protein is GMP synthase [glutamine-hydrolyzing].